A 92-amino-acid polypeptide reads, in one-letter code: DNA/RNA-binding protein Alba (92 aa).

Lysine 11 carries the N6-acetyllysine modification.

The protein belongs to the histone-like Alba family. Acetylated. Acetylation at Lys-11 decreases DNA-binding affinity.

Its subcellular location is the cytoplasm. The protein localises to the chromosome. Functionally, binds double-stranded DNA tightly but without sequence specificity. Involved in DNA compaction. The sequence is that of DNA/RNA-binding protein Alba from Pyrobaculum neutrophilum (strain DSM 2338 / JCM 9278 / NBRC 100436 / V24Sta) (Thermoproteus neutrophilus).